A 279-amino-acid polypeptide reads, in one-letter code: Elongation factor Ts (279 aa).

An involved in Mg(2+) ion dislocation from EF-Tu region spans residues 79-82 (TDFV).

It belongs to the EF-Ts family.

The protein resides in the cytoplasm. Its function is as follows. Associates with the EF-Tu.GDP complex and induces the exchange of GDP to GTP. It remains bound to the aminoacyl-tRNA.EF-Tu.GTP complex up to the GTP hydrolysis stage on the ribosome. This Phytoplasma mali (strain AT) protein is Elongation factor Ts.